The primary structure comprises 122 residues: Phospholipase A2 homolog ECS_00014 (122 aa).

7 disulfides stabilise this stretch: cysteine 26-cysteine 115, cysteine 28-cysteine 44, cysteine 43-cysteine 95, cysteine 49-cysteine 122, cysteine 50-cysteine 88, cysteine 57-cysteine 81, and cysteine 75-cysteine 86. Positions 105–117 (KKYTYYPNFWCKG) are important for membrane-damaging activities in eukaryotes and bacteria; heparin-binding.

It belongs to the phospholipase A2 family. Group II subfamily. S49 sub-subfamily. Monomer. Expressed by the venom gland.

The protein resides in the secreted. Functionally, snake venom phospholipase A2 homolog that lacks enzymatic activity. Shows high myotoxin activities and displays edema-inducing activities. Has cytotoxic activities against HUVEC cells (LC(50)=12.2 uL) and human lung adenocarcinoma A549 cells (LC(50)=8.5 uL). The chain is Phospholipase A2 homolog ECS_00014 from Echis carinatus sochureki (Saw-scaled viper).